A 532-amino-acid polypeptide reads, in one-letter code: Neutral amino acid transporter A (532 aa).

Met1 carries the post-translational modification N-acetylmethionine. Residues 1–29 (MEKSGETNGYLDGTQAEPAAGPRTPETAM) form a disordered region. At 1–41 (MEKSGETNGYLDGTQAEPAAGPRTPETAMGKSQRCASFFRR) the chain is on the cytoplasmic side. A run of 3 helical transmembrane segments spans residues 42–62 (HALV…GAAL), 88–108 (MIIL…LDAS), and 119–139 (AYFG…AFII). The Extracellular portion of the chain corresponds to 140-216 (KPGAGAQTLQ…VTKEKIPVVT (77 aa)). N-linked (GlcNAc...) asparagine glycosylation is found at Asn201 and Asn206. Transmembrane regions (helical) follow at residues 217 to 237 (DVEG…GVAL), 257 to 277 (ATMV…MFLI), 298 to 318 (IFAS…LVYF), 328 to 348 (FLLG…SSAT), 373 to 393 (IGAT…AVFI), and 418 to 438 (VGAA…LEAI). Positions 495-532 (EAIPNSKSEEETSPLVTHQNPAGPVAIAPELESKESVL) are disordered. Phosphoserine occurs at positions 507, 527, and 530.

The protein belongs to the dicarboxylate/amino acid:cation symporter (DAACS) (TC 2.A.23) family. SLC1A4 subfamily.

Its subcellular location is the membrane. The protein resides in the melanosome. It catalyses the reaction L-threonine(in) + Na(+)(in) = L-threonine(out) + Na(+)(out). The enzyme catalyses L-serine(in) + Na(+)(in) = L-serine(out) + Na(+)(out). It carries out the reaction L-cysteine(in) + Na(+)(in) = L-cysteine(out) + Na(+)(out). The catalysed reaction is L-alanine(in) + Na(+)(in) = L-alanine(out) + Na(+)(out). It catalyses the reaction L-proline(in) + Na(+)(in) = L-proline(out) + Na(+)(out). The enzyme catalyses 4-hydroxy-L-proline(in) + Na(+)(in) = 4-hydroxy-L-proline(out) + Na(+)(out). Functionally, sodium-dependent neutral amino-acid transporter that mediates transport of alanine, serine, cysteine, proline, hydroxyproline and threonine. The protein is Neutral amino acid transporter A (Slc1a4) of Mus musculus (Mouse).